The chain runs to 165 residues: Lipoprotein signal peptidase (165 aa).

The next 3 membrane-spanning stretches (helical) occupy residues 9-29, 69-89, and 98-118; these read FLAI…VLLY, KYFL…FLFL, and IRFS…DIVF. Active-site residues include Asp-124 and Asp-142. A helical transmembrane segment spans residues 133–153; sequence WFFPTFNFADIFISLGTLIFI.

The protein belongs to the peptidase A8 family.

Its subcellular location is the cell inner membrane. It carries out the reaction Release of signal peptides from bacterial membrane prolipoproteins. Hydrolyzes -Xaa-Yaa-Zaa-|-(S,diacylglyceryl)Cys-, in which Xaa is hydrophobic (preferably Leu), and Yaa (Ala or Ser) and Zaa (Gly or Ala) have small, neutral side chains.. The protein operates within protein modification; lipoprotein biosynthesis (signal peptide cleavage). In terms of biological role, this protein specifically catalyzes the removal of signal peptides from prolipoproteins. The polypeptide is Lipoprotein signal peptidase (Chlamydia abortus (strain DSM 27085 / S26/3) (Chlamydophila abortus)).